Consider the following 77-residue polypeptide: Large ribosomal subunit protein uL24 (77 aa).

It belongs to the universal ribosomal protein uL24 family. In terms of assembly, part of the 50S ribosomal subunit.

One of two assembly initiator proteins, it binds directly to the 5'-end of the 23S rRNA, where it nucleates assembly of the 50S subunit. Its function is as follows. One of the proteins that surrounds the polypeptide exit tunnel on the outside of the subunit. The protein is Large ribosomal subunit protein uL24 of Campylobacter jejuni subsp. jejuni serotype O:6 (strain 81116 / NCTC 11828).